The sequence spans 139 residues: Peptide methionine sulfoxide reductase MsrB (139 aa).

The MsrB domain occupies 8–130 (DREWQRELSP…NSASLQLKTQ (123 aa)). Zn(2+) is bound by residues Cys-47, Cys-50, Cys-96, and Cys-99. The active-site Nucleophile is Cys-119.

It belongs to the MsrB Met sulfoxide reductase family. Requires Zn(2+) as cofactor.

The catalysed reaction is L-methionyl-[protein] + [thioredoxin]-disulfide + H2O = L-methionyl-(R)-S-oxide-[protein] + [thioredoxin]-dithiol. The protein is Peptide methionine sulfoxide reductase MsrB of Acinetobacter baumannii (strain AB307-0294).